We begin with the raw amino-acid sequence, 322 residues long: Ras association domain-containing protein 4 (322 aa).

The interval 96–161 is disordered; sequence EASPQDSKVP…SKSRAPSEAQ (66 aa). A Phosphoserine modification is found at Ser142. The 90-residue stretch at 175–264 folds into the Ras-associating domain; that stretch reads YNHKTSVFTP…KIFLMEADLS (90 aa). An SARAH domain is found at 271-318; sequence VAQYIKFEMPVLDSFVEKLKEEEEREIIKLTMKFQALRLTMLQRLEQL.

Interacts directly with activated KRAS in a GTP-dependent manner.

In terms of biological role, potential tumor suppressor. May act as a KRAS effector protein. May promote apoptosis and cell cycle arrest. This chain is Ras association domain-containing protein 4 (Rassf4), found in Mus musculus (Mouse).